Reading from the N-terminus, the 392-residue chain is tRNA (guanine-N(7)-)-methyltransferase (392 aa).

Glutamate 123, glutamate 148, and aspartate 175 together coordinate S-adenosyl-L-methionine. Residues lysine 201 and aspartate 231 each coordinate substrate.

This sequence belongs to the class I-like SAM-binding methyltransferase superfamily. TrmB family.

It carries out the reaction guanosine(46) in tRNA + S-adenosyl-L-methionine = N(7)-methylguanosine(46) in tRNA + S-adenosyl-L-homocysteine. The protein operates within tRNA modification; N(7)-methylguanine-tRNA biosynthesis. Its function is as follows. Catalyzes the formation of N(7)-methylguanine at position 46 (m7G46) in tRNA. The protein is tRNA (guanine-N(7)-)-methyltransferase of Campylobacter jejuni subsp. doylei (strain ATCC BAA-1458 / RM4099 / 269.97).